A 340-amino-acid polypeptide reads, in one-letter code: MYG1 protein C27H6.8 (340 aa).

It belongs to the MYG1 family.

The chain is MYG1 protein C27H6.8 from Caenorhabditis elegans.